The sequence spans 688 residues: Glycine--tRNA ligase beta subunit (688 aa).

The protein belongs to the class-II aminoacyl-tRNA synthetase family. In terms of assembly, tetramer of two alpha and two beta subunits.

It is found in the cytoplasm. It catalyses the reaction tRNA(Gly) + glycine + ATP = glycyl-tRNA(Gly) + AMP + diphosphate. This is Glycine--tRNA ligase beta subunit from Shewanella oneidensis (strain ATCC 700550 / JCM 31522 / CIP 106686 / LMG 19005 / NCIMB 14063 / MR-1).